The primary structure comprises 137 residues: Ribonuclease kappa (137 aa).

Transmembrane regions (helical) follow at residues Ala52–Phe72 and Val104–Cys124.

It belongs to the RNase K family. As to quaternary structure, interacts with the proton translocation complex V0 of the V-ATPase. Interacts with ATP6AP1. As to expression, widely expressed.

The protein resides in the endomembrane system. It is found in the cytoplasmic vesicle. It localises to the clathrin-coated vesicle membrane. Endoribonuclease which preferentially cleaves ApU and ApG phosphodiester bonds. Hydrolyzes UpU bonds at a lower rate. Regulates the activity of vacuolar (H+)-ATPase (V-ATPase) which is responsible for acidifying and maintaining the pH of intracellular compartments. Required at an early stage of receptor-mediated endocytosis. Its function is as follows. (Microbial infection) Required at an early stage of both clathrin-mediated and clathrin-independent endocytic uptake of a diverse set of viruses, including dengue, West Nile, Sindbis, Rift Valley Fever, influenza, and human rhinoviruses. This is Ribonuclease kappa (RNASEK) from Homo sapiens (Human).